Reading from the N-terminus, the 253-residue chain is Cholesterol ring-cleaving hydrolase IpdB subunit (253 aa).

Belongs to the 3-oxoacid CoA-transferase subunit B family. Heterotetramer composed of 2 IpdA subunits and 2 IpdB subunits.

It carries out the reaction (3E)-2-(2-carboxylatoethyl)-3-methyl-6-oxocyclohex-1-ene-1-carboxyl-CoA + H2O = 6-methyl-3,7-dioxodecanedioyl-CoA. It participates in steroid metabolism; cholesterol degradation. Functionally, involved in the final steps of cholesterol and steroid degradation. Opens the last steroid ring of cholesterol by catalyzing the hydrolysis of (3E)-2-(2-carboxylatoethyl)-3-methyl-6-oxocyclohex-1-ene-1-carboxyl-CoA (COCHEA-CoA) to 6-methyl-3,7-dioxodecanedioyl-CoA (MeDODA-CoA). This chain is Cholesterol ring-cleaving hydrolase IpdB subunit, found in Rhodococcus jostii (strain RHA1).